The primary structure comprises 336 residues: MRRTGIRLSWRSVDDLALRPKTLDEYIGQERLKQKLRVYLEAAKARKEPLEHLLLFGPPGLGKTTLAHVIAHELGVNLRVTSGPAIEKPGDLAAILANSLEEGDILFIDEIHRLSRQAEEHLYPAMEDFVMDIVIGQGPAARTIRLELPRFTLIGATTRPGLITAPLLSRFGIVEHLEYYTPEELAQGVMRDARLLGVRITEEAALEIGRRSRGTMRVAKRLFRRVRDFAQVAGEEVITRERALEALAALGLDELGLEKRDREILEVLILRFGGGPVGLATLATALSEDPGTLEEVHEPYLIRQGLLKRTPRGRVATELAYRHLGYPPPVGPLLEP.

Residues 1–180 (MRRTGIRLSW…FGIVEHLEYY (180 aa)) are large ATPase domain (RuvB-L). ATP-binding positions include Leu18, Arg19, Gly60, Lys63, Thr64, Thr65, 127 to 129 (EDF), Arg170, Tyr180, and Arg217. Thr64 serves as a coordination point for Mg(2+). The tract at residues 181 to 251 (TPEELAQGVM…RALEALAALG (71 aa)) is small ATPAse domain (RuvB-S). Residues 254 to 336 (ELGLEKRDRE…PPPVGPLLEP (83 aa)) are head domain (RuvB-H). DNA contacts are provided by Arg309 and Arg314.

Belongs to the RuvB family. As to quaternary structure, homohexamer. Forms an RuvA(8)-RuvB(12)-Holliday junction (HJ) complex. HJ DNA is sandwiched between 2 RuvA tetramers; dsDNA enters through RuvA and exits via RuvB. An RuvB hexamer assembles on each DNA strand where it exits the tetramer. Each RuvB hexamer is contacted by two RuvA subunits (via domain III) on 2 adjacent RuvB subunits; this complex drives branch migration. In the full resolvosome a probable DNA-RuvA(4)-RuvB(12)-RuvC(2) complex forms which resolves the HJ.

The protein resides in the cytoplasm. It carries out the reaction ATP + H2O = ADP + phosphate + H(+). In terms of biological role, the RuvA-RuvB-RuvC complex processes Holliday junction (HJ) DNA during genetic recombination and DNA repair, while the RuvA-RuvB complex plays an important role in the rescue of blocked DNA replication forks via replication fork reversal (RFR). RuvA specifically binds to HJ cruciform DNA, conferring on it an open structure. The RuvB hexamer acts as an ATP-dependent pump, pulling dsDNA into and through the RuvAB complex. RuvB forms 2 homohexamers on either side of HJ DNA bound by 1 or 2 RuvA tetramers; 4 subunits per hexamer contact DNA at a time. Coordinated motions by a converter formed by DNA-disengaged RuvB subunits stimulates ATP hydrolysis and nucleotide exchange. Immobilization of the converter enables RuvB to convert the ATP-contained energy into a lever motion, pulling 2 nucleotides of DNA out of the RuvA tetramer per ATP hydrolyzed, thus driving DNA branch migration. The RuvB motors rotate together with the DNA substrate, which together with the progressing nucleotide cycle form the mechanistic basis for DNA recombination by continuous HJ branch migration. Branch migration allows RuvC to scan DNA until it finds its consensus sequence, where it cleaves and resolves cruciform DNA. This Thermus thermophilus (strain ATCC BAA-163 / DSM 7039 / HB27) protein is Holliday junction branch migration complex subunit RuvB.